A 127-amino-acid chain; its full sequence is Fluoride-specific ion channel FluC (127 aa).

Transmembrane regions (helical) follow at residues Leu-4–Ser-24, Gly-39–Ile-59, Ala-68–Tyr-88, and Val-102–Leu-122. Residues Gly-78 and Thr-81 each contribute to the Na(+) site.

The protein belongs to the fluoride channel Fluc/FEX (TC 1.A.43) family.

It localises to the cell inner membrane. It catalyses the reaction fluoride(in) = fluoride(out). Na(+) is not transported, but it plays an essential structural role and its presence is essential for fluoride channel function. Functionally, fluoride-specific ion channel. Important for reducing fluoride concentration in the cell, thus reducing its toxicity. The protein is Fluoride-specific ion channel FluC of Thermotoga maritima (strain ATCC 43589 / DSM 3109 / JCM 10099 / NBRC 100826 / MSB8).